Here is a 360-residue protein sequence, read N- to C-terminus: Peptide chain release factor 1 (360 aa).

Q237 is modified (N5-methylglutamine).

Belongs to the prokaryotic/mitochondrial release factor family. In terms of processing, methylated by PrmC. Methylation increases the termination efficiency of RF1.

The protein localises to the cytoplasm. In terms of biological role, peptide chain release factor 1 directs the termination of translation in response to the peptide chain termination codons UAG and UAA. This chain is Peptide chain release factor 1, found in Ectopseudomonas mendocina (strain ymp) (Pseudomonas mendocina).